The following is a 293-amino-acid chain: ATP synthase gamma chain (293 aa).

This sequence belongs to the ATPase gamma chain family. As to quaternary structure, F-type ATPases have 2 components, CF(1) - the catalytic core - and CF(0) - the membrane proton channel. CF(1) has five subunits: alpha(3), beta(3), gamma(1), delta(1), epsilon(1). CF(0) has three main subunits: a, b and c.

The protein localises to the cell inner membrane. Produces ATP from ADP in the presence of a proton gradient across the membrane. The gamma chain is believed to be important in regulating ATPase activity and the flow of protons through the CF(0) complex. This chain is ATP synthase gamma chain, found in Leptothrix cholodnii (strain ATCC 51168 / LMG 8142 / SP-6) (Leptothrix discophora (strain SP-6)).